Here is a 164-residue protein sequence, read N- to C-terminus: Methanogen homoaconitase small subunit 2 (164 aa).

Residues 26-29 (YLRT) carry the YLRT motif.

The protein belongs to the LeuD family. LeuD type 2 subfamily. Heterotetramer of 2 HacA and 2 HacB proteins. Cannot form a complex with LeuC.

It carries out the reaction (2R)-homocitrate = (2R,3S)-homoisocitrate. The enzyme catalyses (2R)-homocitrate = cis-homoaconitate + H2O. The catalysed reaction is (2R,3S)-homoisocitrate = cis-homoaconitate + H2O. It catalyses the reaction cis-(homo)2aconitate + H2O = (2R,3S)-iso(homo)2citrate. It carries out the reaction cis-(homo)3aconitate + H2O = (2R,3S)-iso(homo)3citrate. It functions in the pathway organic acid metabolism; 2-oxosuberate biosynthesis. Its function is as follows. Component of a hydro-lyase with broad substrate specificity for cis-unsaturated tricarboxylic acids. Catalyzes both the reversible dehydration of (R)-homocitrate ((R)-2-hydroxybutane-1,2,4-tricarboxylate) to produce cis-homoaconitate ((Z)-but-1-ene-1,2,4-tricarboxylate), and its hydration to homoisocitrate ((1R,2S)-1-hydroxybutane-1,2,4-tricarboxylate). Is also able to hydrate the analogous longer chain substrates cis-homo(2)-aconitate, cis-homo(3)-aconitate. These reactions are part of the biosynthesis pathway of coenzyme B. This is Methanogen homoaconitase small subunit 2 (hacB2) from Methanosarcina acetivorans (strain ATCC 35395 / DSM 2834 / JCM 12185 / C2A).